Here is a 501-residue protein sequence, read N- to C-terminus: Glucans biosynthesis protein G (501 aa).

A signal peptide spans Met-1–Ala-25.

The protein belongs to the OpgD/OpgG family.

The protein resides in the periplasm. The protein operates within glycan metabolism; osmoregulated periplasmic glucan (OPG) biosynthesis. In terms of biological role, involved in the biosynthesis of osmoregulated periplasmic glucans (OPGs). The protein is Glucans biosynthesis protein G of Rhodopseudomonas palustris (strain ATCC BAA-98 / CGA009).